Reading from the N-terminus, the 597-residue chain is Arginine--tRNA ligase (597 aa).

The 'HIGH' region motif lies at 125–135; the sequence is PNTNKPLHLGH.

The protein belongs to the class-I aminoacyl-tRNA synthetase family. Monomer.

The protein localises to the cytoplasm. The catalysed reaction is tRNA(Arg) + L-arginine + ATP = L-arginyl-tRNA(Arg) + AMP + diphosphate. The polypeptide is Arginine--tRNA ligase (Bacteroides thetaiotaomicron (strain ATCC 29148 / DSM 2079 / JCM 5827 / CCUG 10774 / NCTC 10582 / VPI-5482 / E50)).